A 224-amino-acid chain; its full sequence is MHIMEGFLPPLWCLIYYIICIPFIVYGIMQIRKVTAESDEAMPMLALSGAFMFILSSLKMPSVTGSCSHPCGNGFGAVFFGPAVVGVLSVIVLVFQAVILAHGGITTLGANVLSMGIIGPLCGYAVWLGLRKLNVNDEIAMFFTAFVADLMTYVVTAIELSLAFPKPDFFTALVTFLGIFAVTQIPLAIAEGILTMVIYRFIKQQKPDILVKLRVISKEEAGVN.

The next 6 membrane-spanning stretches (helical) occupy residues 8 to 28 (LPPLWCLIYYIICIPFIVYGI), 41 to 61 (AMPMLALSGAFMFILSSLKMP), 75 to 95 (FGAVFFGPAVVGVLSVIVLVF), 108 to 128 (LGANVLSMGIIGPLCGYAVWL), 138 to 158 (EIAMFFTAFVADLMTYVVTAI), and 169 to 189 (FFTALVTFLGIFAVTQIPLAI).

Belongs to the CbiM family. Forms an energy-coupling factor (ECF) transporter complex composed of an ATP-binding protein (A component, CbiO), a transmembrane protein (T component, CbiQ) and 2 possible substrate-capture proteins (S components, CbiM and CbiN) of unknown stoichimetry.

The protein localises to the cell membrane. It functions in the pathway cofactor biosynthesis; adenosylcobalamin biosynthesis. Part of the energy-coupling factor (ECF) transporter complex CbiMNOQ involved in cobalt import. In Methanosphaera stadtmanae (strain ATCC 43021 / DSM 3091 / JCM 11832 / MCB-3), this protein is Putative cobalt transport protein CbiM.